A 462-amino-acid polypeptide reads, in one-letter code: L-seryl-tRNA(Sec) selenium transferase (462 aa).

Residue Lys292 is modified to N6-(pyridoxal phosphate)lysine.

The protein belongs to the SelA family. Requires pyridoxal 5'-phosphate as cofactor.

It localises to the cytoplasm. It carries out the reaction L-seryl-tRNA(Sec) + selenophosphate + H(+) = L-selenocysteinyl-tRNA(Sec) + phosphate. Its pathway is aminoacyl-tRNA biosynthesis; selenocysteinyl-tRNA(Sec) biosynthesis; selenocysteinyl-tRNA(Sec) from L-seryl-tRNA(Sec) (bacterial route): step 1/1. Converts seryl-tRNA(Sec) to selenocysteinyl-tRNA(Sec) required for selenoprotein biosynthesis. This is L-seryl-tRNA(Sec) selenium transferase from Geotalea daltonii (strain DSM 22248 / JCM 15807 / FRC-32) (Geobacter daltonii).